The sequence spans 582 residues: Formate--tetrahydrofolate ligase (582 aa).

65–72 (TPLGEGKT) provides a ligand contact to ATP.

Belongs to the formate--tetrahydrofolate ligase family.

The enzyme catalyses (6S)-5,6,7,8-tetrahydrofolate + formate + ATP = (6R)-10-formyltetrahydrofolate + ADP + phosphate. It functions in the pathway one-carbon metabolism; tetrahydrofolate interconversion. The protein is Formate--tetrahydrofolate ligase of Vibrio cholerae serotype O1 (strain ATCC 39315 / El Tor Inaba N16961).